A 364-amino-acid chain; its full sequence is Methylthioribose-1-phosphate isomerase (364 aa).

Substrate-binding positions include 53–55 (RGA), R90, and Q203. D244 serves as the catalytic Proton donor. 254 to 255 (NK) is a substrate binding site.

The protein belongs to the eIF-2B alpha/beta/delta subunits family. MtnA subfamily.

It carries out the reaction 5-(methylsulfanyl)-alpha-D-ribose 1-phosphate = 5-(methylsulfanyl)-D-ribulose 1-phosphate. Its pathway is amino-acid biosynthesis; L-methionine biosynthesis via salvage pathway; L-methionine from S-methyl-5-thio-alpha-D-ribose 1-phosphate: step 1/6. Functionally, catalyzes the interconversion of methylthioribose-1-phosphate (MTR-1-P) into methylthioribulose-1-phosphate (MTRu-1-P). The protein is Methylthioribose-1-phosphate isomerase of Rhizobium meliloti (strain 1021) (Ensifer meliloti).